A 106-amino-acid chain; its full sequence is uncharacterized protein (106 aa).

A run of 2 helical transmembrane segments spans residues 53-70 (LLLLTAAILYIVMPLDII) and 74-93 (ILGLGFIDDAAVLGLIWTLI).

Its subcellular location is the cell membrane. This is an uncharacterized protein from Bacillus subtilis (strain 168).